The chain runs to 454 residues: Ribosomal protein uS12 methylthiotransferase RimO (454 aa).

Residues 14–125 enclose the MTTase N-terminal domain; sequence SKVAFSHVGC…IAKVLDRVEK (112 aa). Residues C23, C59, C88, C163, C167, and C170 each contribute to the [4Fe-4S] cluster site. In terms of domain architecture, Radical SAM core spans 149 to 378; that stretch reads DKNKFVAYLR…ISVQQNISKD (230 aa). A TRAM domain is found at 381–452; the sequence is QSYVGSKMKI…EYDLYGETLK (72 aa).

Belongs to the methylthiotransferase family. RimO subfamily. The cofactor is [4Fe-4S] cluster.

The protein localises to the cytoplasm. The catalysed reaction is L-aspartate(89)-[ribosomal protein uS12]-hydrogen + (sulfur carrier)-SH + AH2 + 2 S-adenosyl-L-methionine = 3-methylsulfanyl-L-aspartate(89)-[ribosomal protein uS12]-hydrogen + (sulfur carrier)-H + 5'-deoxyadenosine + L-methionine + A + S-adenosyl-L-homocysteine + 2 H(+). Its function is as follows. Catalyzes the methylthiolation of an aspartic acid residue of ribosomal protein uS12. The polypeptide is Ribosomal protein uS12 methylthiotransferase RimO (Prochlorococcus marinus (strain MIT 9215)).